Reading from the N-terminus, the 154-residue chain is IQ domain-containing protein F3 (154 aa).

The IQ domain occupies 89–118; it reads QEQATVKLQSCIRMWQCRQCYRQMCNALCL.

The chain is IQ domain-containing protein F3 (IQCF3) from Homo sapiens (Human).